The sequence spans 96 residues: uncharacterized protein (96 aa).

The HTH cro/C1-type domain maps to 38 to 91; sequence IEQLRKGTGLKIDDFARVLGVSVAMVKEWESRRVKPSSAELKLMRLIQANPALS. Positions 49 to 68 form a DNA-binding region, H-T-H motif; it reads IDDFARVLGVSVAMVKEWES.

This is an uncharacterized protein from Escherichia coli O157:H7.